A 245-amino-acid chain; its full sequence is Acetylglutamate kinase (245 aa).

Residues 41 to 42 (GG), R63, and N156 contribute to the substrate site.

This sequence belongs to the acetylglutamate kinase family. ArgB subfamily.

The protein localises to the cytoplasm. It carries out the reaction N-acetyl-L-glutamate + ATP = N-acetyl-L-glutamyl 5-phosphate + ADP. It functions in the pathway amino-acid biosynthesis; L-arginine biosynthesis; N(2)-acetyl-L-ornithine from L-glutamate: step 2/4. Its function is as follows. Catalyzes the ATP-dependent phosphorylation of N-acetyl-L-glutamate. The sequence is that of Acetylglutamate kinase from Leuconostoc citreum (strain KM20).